We begin with the raw amino-acid sequence, 493 residues long: Serine/threonine-protein kinase PBL34 (493 aa).

Disordered stretches follow at residues 1-42 and 84-117; these read MGLD…EEEE and SKSA…TPVI. Gly2 is lipidated: N-myristoyl glycine. Over residues 12–37 the composition is skewed to basic and acidic residues; sequence WKSEKPKETENKNHKKKNGDDNKSRN. Positions 100–114 are enriched in low complexity; that stretch reads SSTTTTSNAESSSST. The residue at position 131 (Thr131) is a Phosphothreonine. Positions 142–428 constitute a Protein kinase domain; it reads FRPESLLGEG…VEALKPLPHL (287 aa). Residues 148-156 and Lys180 contribute to the ATP site; that span reads LGEGGFGCV. Tyr225 bears the Phosphotyrosine mark. Asp275 (proton acceptor) is an active-site residue. Ser279 is subject to Phosphoserine. Thr306 is modified (phosphothreonine). Ser309 is subject to Phosphoserine. Phosphothreonine is present on residues Thr310 and Thr315. Tyr323 bears the Phosphotyrosine mark. The tract at residues 447-493 is disordered; sequence KNGSGRSQGFGSRNGQHQPVFRTLSSPHGSSPYRHQIPSPKPKGATT. Residues 450 to 475 are compositionally biased toward polar residues; the sequence is SGRSQGFGSRNGQHQPVFRTLSSPHG.

It belongs to the protein kinase superfamily. Ser/Thr protein kinase family. As to quaternary structure, interacts with the Xanthomonas campestris effector XopAC/AvrAC. Interacts with SD129. In terms of processing, phosphorylated by SD129 at Thr-306 and Thr-310 in response to the pathogen-associated molecular pattern (PAMP) 3-OH-C10:0, a medium-chain 3-hydroxy fatty acid.

The protein resides in the cell membrane. It carries out the reaction L-seryl-[protein] + ATP = O-phospho-L-seryl-[protein] + ADP + H(+). It catalyses the reaction L-threonyl-[protein] + ATP = O-phospho-L-threonyl-[protein] + ADP + H(+). Its function is as follows. Involved in chitin-triggered immune signaling and is required for reactive oxygen species (ROS) production. Acts downstream of SD129 in defense signaling triggered by the pathogen-associated molecular pattern (PAMP) 3-OH-C10:0, a medium-chain 3-hydroxy fatty acid. This chain is Serine/threonine-protein kinase PBL34, found in Arabidopsis thaliana (Mouse-ear cress).